Reading from the N-terminus, the 488-residue chain is 5'-3' exonuclease PLD3 (488 aa).

Over 1 to 38 (MKPKLMYQELKVPVEEPAGELPMNEIEAWKAAEKKARW) the chain is Cytoplasmic. A helical; Signal-anchor for type II membrane protein transmembrane segment spans residues 39 to 59 (VLLVLILAVVGFGALMTQLFL). Topologically, residues 60–488 (WEYGDLHLFG…DSVGNACRLL (429 aa)) are lumenal. 2 disulfide bridges follow: Cys77–Cys237 and Cys81–Cys235. 2 N-linked (GlcNAc...) asparagine glycosylation sites follow: Asn97 and Asn132. One can recognise a PLD phosphodiesterase 1 domain in the interval 194-221 (THGVLHTKFWVVDQTHFYLGSANMDWRS). Residues His199, Lys201, and Asp206 contribute to the active site. Catalysis depends on His199, which acts as the Proton donor. The phosphate site is built by His199 and Lys201. Asn216 contributes to the phosphate binding site. Asn234, Asn282, and Asn385 each carry an N-linked (GlcNAc...) asparagine glycan. Cys364 and Cys485 form a disulfide bridge. Residues 409–435 (YARVNHNKYMVTERTTYIGTSNWSGSY) form the PLD phosphodiesterase 2 domain. Residue His414 participates in phosphate binding. His414 functions as the Nucleophile in the catalytic mechanism. Phe436 provides a ligand contact to Mg(2+).

The protein belongs to the phospholipase D family. In terms of assembly, homodimer. Interacts with APP. N-glycosylated. In terms of processing, proteolytically processed to a soluble form that is stable within endosomes and lysosomes. During transport through the secretory pathway becomes proteolysed by cysteine proteases, thereby releasing a stable soluble lysosomal lumenal polypeptide, whereas the transmembrane-bound fragment is rapidly degraded. Its transport route to lysosomes involves ubiquitination and the ESCRT complex. Post-translationally, ubiquitinated. Ubiquitination mediates sorting into lysosomes.

It localises to the endoplasmic reticulum membrane. The protein localises to the lysosome lumen. The protein resides in the early endosome membrane. It is found in the late endosome membrane. Its subcellular location is the golgi apparatus membrane. It localises to the endosome membrane. The enzyme catalyses Exonucleolytic cleavage in the 5'- to 3'-direction to yield nucleoside 3'-phosphates.. It carries out the reaction a 5'-end 5'-dephospho-ribonucleotidyl-ribonucleotide-RNA + H2O = a ribonucleoside 3'-phosphate + a 5'-end dephospho-ribonucleoside-RNA + H(+). It catalyses the reaction a ribonucleoside 3'-phosphate-2'-3'-cyclophospho-GMP + H2O = a ribonucleoside 3'-phosphate + 2',3'-cyclophospho-GMP + H(+). The catalysed reaction is a 5'-end 5'-dephospho-2'-deoxyribonucleotidyl-2'-deoxyribonucleotide in single-stranded DNA + H2O = a 5'-end dephospho-2'-deoxyribonucleoside in single-stranded DNA + a 2'-deoxyribonucleoside 3'-phosphate + H(+). The enzyme catalyses a 5'-end 5'-phospho-2'-deoxyribonucleotide in single-stranded DNA + H2O = a 5'-end 5'-dephospho-2'-deoxyribonucleotide in single-stranded DNA + phosphate. It carries out the reaction a 3-lyso-sn-glycero-1-phospho-(3'-acyl-1'-sn-glycerol) + a 1-acyl-sn-glycerol = a 3-acyl-sn-glycero-1-phospho-(3'-acyl-1'-sn-glycerol) + glycerol. It catalyses the reaction 3-lyso-sn-glycero-1-phospho-(3'-(9Z-octadecenoyl)-1'-sn-glycerol) + 1-(9Z-octadecenoyl)-sn-glycerol = 3-(9Z-octadecenoyl)-sn-glycero-1-phospho-(3'-(9Z-octadecenoyl)-1'-sn-glycerol) + glycerol. 5'-&gt;3' exonuclease that hydrolyzes the phosphodiester bond of single-stranded DNA (ssDNA) and RNA molecules to form nucleoside 3'-monophosphates and 5'-end 5'-hydroxy deoxyribonucleotide/ribonucleotide fragments. Partially redundant with PLD4, can cleave all four nucleotides displaying higher efficiency for ssDNA and RNA fragments initiated with uridine and guanosine residues and lower efficiency for cytidine-initiated substrates. As a result, it does not always degrade polynucleotides to the single nucleotide level, it can stall at specific sites sparing certain fragments from exonucleolytic degradation. Processes self and pathogenic ssDNA and RNA molecules that reach the endolysosomal compartment via phagocytosis or autophagy and may serve as 'danger' signals for recognition by innate immune receptors such as toll-like receptors (TLRs). Degrades mitochondrial CpG-rich ssDNA fragments to prevent TLR9 activation and autoinflammatory response, but it can cleave viral RNA to generate ligands for TLR7 activation and initiate antiviral immune responses. In plasmacytoid dendritic cells, it cooperates with endonuclease RNASET2 to release 2',3'-cyclic guanosine monophosphate (2',3'-cGMP), a potent stimulatory ligand for TLR7. Produces 2',3'-cGMPs and cytidine-rich RNA fragments that occupy TLR7 ligand-binding pockets and trigger a signaling-competent state. Can exert polynucleotide phosphatase activity toward 5'-phosphorylated ssDNA substrates although at a slow rate. Transphosphatidylase that catalyzes the exchange with R to S stereo-inversion of the glycerol moiety between (S,R)-lysophosphatidylglycerol (LPG) and monoacylglycerol (MAG) substrates to yield (S,S)-bis(monoacylglycero)phosphate (BMP). Can synthesize a variety of (S,S)-BMPs representing the main phospholipid constituent of lysosomal intralumenal vesicle (ILV) membranes that bind acid hydrolases for lipid degradation. Regulates the homeostasis and interorganellar communication of the endolysosomal system with an overall impact on cellular removal of dysfunctional organelles via autophagy as well as proper protein and lipid turnover. May play a role in myotube formation in response to ER stress. This Rattus norvegicus (Rat) protein is 5'-3' exonuclease PLD3 (Pld3).